Consider the following 153-residue polypeptide: UPF0266 membrane protein SG1324 (153 aa).

3 helical membrane-spanning segments follow: residues 6–26 (IGLV…EFIV), 46–66 (LDGL…ITTD), and 68–88 (KVMT…LAYI).

Belongs to the UPF0266 family.

It is found in the cell inner membrane. The polypeptide is UPF0266 membrane protein SG1324 (Sodalis glossinidius (strain morsitans)).